The following is a 91-amino-acid chain: Small ribosomal subunit protein uS19 (91 aa).

This sequence belongs to the universal ribosomal protein uS19 family.

Protein S19 forms a complex with S13 that binds strongly to the 16S ribosomal RNA. This Janthinobacterium sp. (strain Marseille) (Minibacterium massiliensis) protein is Small ribosomal subunit protein uS19.